We begin with the raw amino-acid sequence, 194 residues long: FMN-dependent NADH:quinone oxidoreductase (194 aa).

FMN contacts are provided by residues serine 9, 15–17 (SIS), and 85–88 (MYNF).

The protein belongs to the azoreductase type 1 family. Homodimer. Requires FMN as cofactor.

The catalysed reaction is 2 a quinone + NADH + H(+) = 2 a 1,4-benzosemiquinone + NAD(+). The enzyme catalyses N,N-dimethyl-1,4-phenylenediamine + anthranilate + 2 NAD(+) = 2-(4-dimethylaminophenyl)diazenylbenzoate + 2 NADH + 2 H(+). Functionally, quinone reductase that provides resistance to thiol-specific stress caused by electrophilic quinones. Its function is as follows. Also exhibits azoreductase activity. Catalyzes the reductive cleavage of the azo bond in aromatic azo compounds to the corresponding amines. The chain is FMN-dependent NADH:quinone oxidoreductase from Xanthomonas oryzae pv. oryzae (strain MAFF 311018).